Consider the following 200-residue polypeptide: Orotate phosphoribosyltransferase (200 aa).

5-phospho-alpha-D-ribose 1-diphosphate contacts are provided by residues arginine 95, lysine 99, histidine 101, and 121 to 129 (DDVATTGGS). The orotate site is built by threonine 125 and arginine 153.

This sequence belongs to the purine/pyrimidine phosphoribosyltransferase family. PyrE subfamily. Homodimer. The cofactor is Mg(2+).

It catalyses the reaction orotidine 5'-phosphate + diphosphate = orotate + 5-phospho-alpha-D-ribose 1-diphosphate. The protein operates within pyrimidine metabolism; UMP biosynthesis via de novo pathway; UMP from orotate: step 1/2. Functionally, catalyzes the transfer of a ribosyl phosphate group from 5-phosphoribose 1-diphosphate to orotate, leading to the formation of orotidine monophosphate (OMP). The sequence is that of Orotate phosphoribosyltransferase from Cenarchaeum symbiosum (strain A).